We begin with the raw amino-acid sequence, 326 residues long: Glyoxylate/hydroxypyruvate reductase B (326 aa).

Residues Arg237 and Glu266 contribute to the active site. His285 acts as the Proton donor in catalysis.

It belongs to the D-isomer specific 2-hydroxyacid dehydrogenase family. GhrB subfamily. In terms of assembly, homodimer.

It is found in the cytoplasm. The catalysed reaction is glycolate + NADP(+) = glyoxylate + NADPH + H(+). It carries out the reaction (R)-glycerate + NAD(+) = 3-hydroxypyruvate + NADH + H(+). It catalyses the reaction (R)-glycerate + NADP(+) = 3-hydroxypyruvate + NADPH + H(+). Functionally, catalyzes the NADPH-dependent reduction of glyoxylate and hydroxypyruvate into glycolate and glycerate, respectively. The protein is Glyoxylate/hydroxypyruvate reductase B of Yersinia pseudotuberculosis serotype O:3 (strain YPIII).